The sequence spans 132 residues: Phosphoribosyl-AMP cyclohydrolase (132 aa).

Asp86 contributes to the Mg(2+) binding site. Zn(2+) is bound at residue Cys87. Positions 88 and 90 each coordinate Mg(2+). Residues Cys103 and Cys110 each contribute to the Zn(2+) site.

It belongs to the PRA-CH family. Homodimer. Mg(2+) serves as cofactor. It depends on Zn(2+) as a cofactor.

It is found in the cytoplasm. It catalyses the reaction 1-(5-phospho-beta-D-ribosyl)-5'-AMP + H2O = 1-(5-phospho-beta-D-ribosyl)-5-[(5-phospho-beta-D-ribosylamino)methylideneamino]imidazole-4-carboxamide. The protein operates within amino-acid biosynthesis; L-histidine biosynthesis; L-histidine from 5-phospho-alpha-D-ribose 1-diphosphate: step 3/9. Functionally, catalyzes the hydrolysis of the adenine ring of phosphoribosyl-AMP. The chain is Phosphoribosyl-AMP cyclohydrolase from Haloquadratum walsbyi (strain DSM 16790 / HBSQ001).